The primary structure comprises 507 residues: Probable bifunctional methylthioribulose-1-phosphate dehydratase/enolase-phosphatase E1 (507 aa).

Ala-2 carries the N-acetylalanine modification. Residues 2 to 237 (AVAAAAMIGL…AIKLHQLGLD (236 aa)) form a methylthioribulose-1-phosphate dehydratase region. Position 109 (Cys-109) interacts with substrate. Zn(2+)-binding residues include His-127 and His-129. The active-site Proton donor/acceptor is the Glu-152. His-202 contributes to the Zn(2+) binding site. Residues 268-507 (IVLDIEGTTT…FKTVTSFSQI (240 aa)) are enolase-phosphatase E1. Mg(2+) is bound by residues Asp-271 and Glu-273. Residues 406–407 (SS) and Lys-440 each bind substrate. Asp-466 lines the Mg(2+) pocket.

It in the N-terminal section; belongs to the aldolase class II family. MtnB subfamily. The protein in the C-terminal section; belongs to the HAD-like hydrolase superfamily. MasA/MtnC family. Zn(2+) serves as cofactor. Mg(2+) is required as a cofactor.

The enzyme catalyses 5-(methylsulfanyl)-D-ribulose 1-phosphate = 5-methylsulfanyl-2,3-dioxopentyl phosphate + H2O. It catalyses the reaction 5-methylsulfanyl-2,3-dioxopentyl phosphate + H2O = 1,2-dihydroxy-5-(methylsulfanyl)pent-1-en-3-one + phosphate. Its pathway is amino-acid biosynthesis; L-methionine biosynthesis via salvage pathway; L-methionine from S-methyl-5-thio-alpha-D-ribose 1-phosphate: step 2/6. It functions in the pathway amino-acid biosynthesis; L-methionine biosynthesis via salvage pathway; L-methionine from S-methyl-5-thio-alpha-D-ribose 1-phosphate: step 3/6. The protein operates within amino-acid biosynthesis; L-methionine biosynthesis via salvage pathway; L-methionine from S-methyl-5-thio-alpha-D-ribose 1-phosphate: step 4/6. This is Probable bifunctional methylthioribulose-1-phosphate dehydratase/enolase-phosphatase E1 from Arabidopsis thaliana (Mouse-ear cress).